Consider the following 98-residue polypeptide: NADH-ubiquinone oxidoreductase chain 4L (98 aa).

The next 3 membrane-spanning stretches (helical) occupy residues 1-21, 29-49, and 59-79; these read MTTM…GVYI, TLLC…LTLL, and FPLI…ALLV.

It belongs to the complex I subunit 4L family. In terms of assembly, core subunit of respiratory chain NADH dehydrogenase (Complex I) which is composed of 45 different subunits.

Its subcellular location is the mitochondrion inner membrane. The enzyme catalyses a ubiquinone + NADH + 5 H(+)(in) = a ubiquinol + NAD(+) + 4 H(+)(out). Its function is as follows. Core subunit of the mitochondrial membrane respiratory chain NADH dehydrogenase (Complex I) which catalyzes electron transfer from NADH through the respiratory chain, using ubiquinone as an electron acceptor. Part of the enzyme membrane arm which is embedded in the lipid bilayer and involved in proton translocation. This is NADH-ubiquinone oxidoreductase chain 4L (MT-ND4L) from Zaglossus bruijni (Western long-beaked echidna).